The chain runs to 605 residues: DNA mismatch repair protein MutL (605 aa).

Belongs to the DNA mismatch repair MutL/HexB family.

In terms of biological role, this protein is involved in the repair of mismatches in DNA. It is required for dam-dependent methyl-directed DNA mismatch repair. May act as a 'molecular matchmaker', a protein that promotes the formation of a stable complex between two or more DNA-binding proteins in an ATP-dependent manner without itself being part of a final effector complex. In Pelotomaculum thermopropionicum (strain DSM 13744 / JCM 10971 / SI), this protein is DNA mismatch repair protein MutL.